The chain runs to 311 residues: Probable protein phosphatase 2C 59 (311 aa).

Over residues 1 to 14 the composition is skewed to low complexity; sequence MGYLNSVLSSSSQV. Positions 1–26 are disordered; that stretch reads MGYLNSVLSSSSQVHSDDGPVSGGGL. A PPM-type phosphatase domain is found at 33-279; the sequence is SYGYASSPGK…DNITCVVVRF (247 aa). Mn(2+) is bound by residues Asp-69, Gly-70, Asp-231, and Asp-270.

Belongs to the PP2C family. In terms of assembly, interacts with the Pseudomonas syringae pv. maculicola effector HopW1-1 (via C-terminus). Requires Mg(2+) as cofactor. Mn(2+) serves as cofactor.

It catalyses the reaction O-phospho-L-seryl-[protein] + H2O = L-seryl-[protein] + phosphate. The catalysed reaction is O-phospho-L-threonyl-[protein] + H2O = L-threonyl-[protein] + phosphate. With respect to regulation, inhibited by sodium fluoride (NaF). Its function is as follows. Protein phosphatase that modulates defense response to pathogenic bacteria, conferring resistance and promoting salicylic acid (SA) accumulation. The polypeptide is Probable protein phosphatase 2C 59 (WIN2) (Arabidopsis thaliana (Mouse-ear cress)).